The chain runs to 365 residues: tRNA/tmRNA (uracil-C(5))-methyltransferase (365 aa).

S-adenosyl-L-methionine contacts are provided by glutamine 189, tyrosine 217, asparagine 222, glutamate 238, and aspartate 298. Catalysis depends on cysteine 323, which acts as the Nucleophile. The active-site Proton acceptor is glutamate 357.

It belongs to the class I-like SAM-binding methyltransferase superfamily. RNA M5U methyltransferase family. TrmA subfamily.

It carries out the reaction uridine(54) in tRNA + S-adenosyl-L-methionine = 5-methyluridine(54) in tRNA + S-adenosyl-L-homocysteine + H(+). It catalyses the reaction uridine(341) in tmRNA + S-adenosyl-L-methionine = 5-methyluridine(341) in tmRNA + S-adenosyl-L-homocysteine + H(+). Dual-specificity methyltransferase that catalyzes the formation of 5-methyluridine at position 54 (m5U54) in all tRNAs, and that of position 341 (m5U341) in tmRNA (transfer-mRNA). The sequence is that of tRNA/tmRNA (uracil-C(5))-methyltransferase from Proteus mirabilis (strain HI4320).